The sequence spans 280 residues: Undecaprenyl-diphosphatase (280 aa).

8 helical membrane passes run 1-21, 41-61, 87-107, 115-135, 147-167, 186-206, 226-246, and 260-280; these read MTIL…FLPV, FVRA…LVLY, FDLY…GFLF, LGSV…MLFV, ITYP…FLPG, KAAA…ATLL, VLLV…KFFI, and YRIL…SLAV.

It belongs to the UppP family.

It localises to the cell inner membrane. It carries out the reaction di-trans,octa-cis-undecaprenyl diphosphate + H2O = di-trans,octa-cis-undecaprenyl phosphate + phosphate + H(+). Catalyzes the dephosphorylation of undecaprenyl diphosphate (UPP). Confers resistance to bacitracin. In Porphyromonas gingivalis (strain ATCC BAA-308 / W83), this protein is Undecaprenyl-diphosphatase.